The following is a 427-amino-acid chain: MLDIQLLRKDAALVAERLAARGFAFDAARFDALEAERKTIQTRTQDAQSRRNTLSKQIGMLKGKGEDTTAVMAEVGGLGDELKQLETRLSELQAELNDFLMGIPNLPHESVAPGKDETANVEVSRWGTPRQFDFAVRDHVDLGEGLGQLDFAAAVKITGSRFSVMRGGLARLHRALAQFMLDLHTTEHGYTEVYVPYVVNAESMRGTGQLPKFEEDLFHVPRSDADRLYLIPTAEVPVTNLVRDEIVAAEALPLKFVAHTPCFRSEAGSYGRDTRGMIRQHQFDKVELVQMVRPEDSYAALEGLAAHAETVLQRLGLPYRKMALCSGDMGFSAAKTYDLEVWLPAQNTYREISSCSNFEAFQARRMQARFREGQGKPELLHTLNGSGLAVGRTLVAILENYQNADGSITVPEALRPWMGGVERLTPA.

233-235 serves as a coordination point for L-serine; the sequence is TAE. 264-266 lines the ATP pocket; that stretch reads RSE. Glutamate 287 serves as a coordination point for L-serine. Residue 351–354 coordinates ATP; the sequence is EISS. Serine 386 is an L-serine binding site.

It belongs to the class-II aminoacyl-tRNA synthetase family. Type-1 seryl-tRNA synthetase subfamily. Homodimer. The tRNA molecule binds across the dimer.

Its subcellular location is the cytoplasm. The catalysed reaction is tRNA(Ser) + L-serine + ATP = L-seryl-tRNA(Ser) + AMP + diphosphate + H(+). It carries out the reaction tRNA(Sec) + L-serine + ATP = L-seryl-tRNA(Sec) + AMP + diphosphate + H(+). It functions in the pathway aminoacyl-tRNA biosynthesis; selenocysteinyl-tRNA(Sec) biosynthesis; L-seryl-tRNA(Sec) from L-serine and tRNA(Sec): step 1/1. Catalyzes the attachment of serine to tRNA(Ser). Is also able to aminoacylate tRNA(Sec) with serine, to form the misacylated tRNA L-seryl-tRNA(Sec), which will be further converted into selenocysteinyl-tRNA(Sec). This chain is Serine--tRNA ligase, found in Thiobacillus denitrificans (strain ATCC 25259 / T1).